The chain runs to 115 residues: MKFVLLFGVLLVTLFSHSSAEMLDDFDQADEDELLSLIEKEEARAEECTPRFYDCSHDRHSCCRSELFKDVCTCFYPEGGDNEVCTCQQPKHLKYMEKAADKAKKFGGKIKKWFG.

The first 20 residues, 1–20 (MKFVLLFGVLLVTLFSHSSA), serve as a signal peptide directing secretion. Residues 21–44 (EMLDDFDQADEDELLSLIEKEEAR) constitute a propeptide that is removed on maturation. Cystine bridges form between C48/C63, C55/C72, C62/C87, and C74/C85.

It belongs to the neurotoxin 19 (CSTX) family. 01 subfamily. Expressed by the venom gland.

Its subcellular location is the secreted. The sequence is that of U3-lycotoxin-Ls1v from Lycosa singoriensis (Wolf spider).